A 199-amino-acid polypeptide reads, in one-letter code: Recombination protein RecR (199 aa).

The segment at 56–71 (CTVCFNVTEQETCNIC) adopts a C4-type zinc-finger fold. A Toprim domain is found at 79-174 (SVICVVEESK…TVTRLASGLP (96 aa)).

Belongs to the RecR family.

In terms of biological role, may play a role in DNA repair. It seems to be involved in an RecBC-independent recombinational process of DNA repair. It may act with RecF and RecO. The chain is Recombination protein RecR from Paenarthrobacter aurescens (strain TC1).